Reading from the N-terminus, the 324-residue chain is CYFIP-related Rac1 interactor B (324 aa).

The N-myristoyl glycine moiety is linked to residue glycine 2. A Glycyl lysine isopeptide (Lys-Gly) (interchain with G-Cter in ubiquitin) cross-link involves residue lysine 74.

Belongs to the CYRI family. Interacts with RAC1 (GTP-bound form preferentially). Post-translationally, ubiquitinated at Lys-74 upon Salmonella bacterial infection.

It localises to the membrane. It is found in the mitochondrion. Functionally, negatively regulates RAC1 signaling and RAC1-driven cytoskeletal remodeling. Regulates chemotaxis, cell migration and epithelial polarization by controlling the polarity, plasticity, duration and extent of protrusions. Limits Rac1 mediated activation of the Scar/WAVE complex, focuses protrusion signals and regulates pseudopod complexity by inhibiting Scar/WAVE-induced actin polymerization. Protects against Salmonella bacterial infection. Attenuates processes such as macropinocytosis, phagocytosis and cell migration and restrict sopE-mediated bacterial entry. Also restricts infection mediated by Mycobacterium tuberculosis and Listeria monocytogenes. Involved in the regulation of mitochondrial dynamics and oxidative stress. The sequence is that of CYFIP-related Rac1 interactor B from Homo sapiens (Human).